The primary structure comprises 305 residues: tRNA pseudouridine synthase B (305 aa).

D38 (nucleophile) is an active-site residue.

This sequence belongs to the pseudouridine synthase TruB family. Type 1 subfamily.

The enzyme catalyses uridine(55) in tRNA = pseudouridine(55) in tRNA. Functionally, responsible for synthesis of pseudouridine from uracil-55 in the psi GC loop of transfer RNAs. In Latilactobacillus sakei subsp. sakei (strain 23K) (Lactobacillus sakei subsp. sakei), this protein is tRNA pseudouridine synthase B.